The sequence spans 998 residues: RNA-directed RNA polymerase (998 aa).

Residues 17-34 (LPVGIATVSGCGAVVYCI) traverse the membrane as a helical segment. The tract at residues 35 to 998 (SKFWGYGAIA…AQPQPSNNRK (964 aa)) is cytoplasmic. A capping region spans residues 91-282 (NGHAVSGAVR…LVYTIPQYVI (192 aa)). D692 serves as the catalytic For RdRp/TNTase activity. The segment at 901–998 (AKQTRANPGT…AQPQPSNNRK (98 aa)) is disordered. Polar residues-rich tracts occupy residues 904-913 (TRANPGTSRP) and 947-961 (GKTN…TAGE). Residues 971–984 (KGPRGGKTNTRRTP) show a composition bias toward basic residues.

Belongs to the nodaviridae RNA polymerase family. As to quaternary structure, homododecamer. Forms 2 stacked rings of 35-nm in diameter, arranged in a crown-like structure at the opening of virus-induced replication vesicles. Interacts with protein B2. Requires Mn(2+) as cofactor.

It localises to the host mitochondrion outer membrane. It carries out the reaction RNA(n) + a ribonucleoside 5'-triphosphate = RNA(n+1) + diphosphate. Drastically inhibited by phosphonoacetic acid. Only slightly inhibited by gliotoxin. In terms of biological role, RNA-dependent RNA polymerase, which replicates the viral genome composed of 2 RNA segments, RNA1 and RNA2. Does not need an exogenous primer. Also possesses a terminal nucleotidyl transferase (TNTase) activity. The TNTase catalyzes the addition of nucleotide to the 3'-end of plus- and minus-stranded RNAs, probably to repair the 3'-end nucleotide loss. Forms the open necked connection to the cytosol of the virus-induced replication vesicles. Mediates viral RNA1 recruitment. This Heteronychus arator (African black beetle) protein is RNA-directed RNA polymerase.